Reading from the N-terminus, the 310-residue chain is p-hydroxybenzoic acid efflux pump subunit AaeA (310 aa).

A helical membrane pass occupies residues 12-32; sequence AITVILVILAFVAIFRAWVYY.

Belongs to the membrane fusion protein (MFP) (TC 8.A.1) family.

It localises to the cell inner membrane. Forms an efflux pump with AaeB. This chain is p-hydroxybenzoic acid efflux pump subunit AaeA, found in Klebsiella pneumoniae (strain 342).